Reading from the N-terminus, the 141-residue chain is VLSPTDKTNVKTAWSHVGAHAGEYGAEALERMFLSFPTTKTYFPHFDLSHGSAQVKAHGKKVGDALTQAVGHLDDLPGALSALSDLHAYKLRVDPVNFKLLSHCLLVTLALHNPQDFTPAVHASLDKFLSNVSTVLTSKYR.

Residues 1 to 141 (VLSPTDKTNV…VSTVLTSKYR (141 aa)) enclose the Globin domain. At Ser-3 the chain carries Phosphoserine. N6-succinyllysine is present on Lys-7. A Phosphothreonine modification is found at Thr-8. N6-succinyllysine is present on Lys-11. Tyr-24 bears the Phosphotyrosine mark. Residue Ser-35 is modified to Phosphoserine. At Lys-40 the chain carries N6-succinyllysine. The residue at position 49 (Ser-49) is a Phosphoserine. His-58 provides a ligand contact to O2. Residue His-87 coordinates heme b. Ser-102 carries the phosphoserine modification. Thr-108 carries the phosphothreonine modification. Residue Ser-124 is modified to Phosphoserine. Phosphothreonine is present on residues Thr-134 and Thr-137. Residue Ser-138 is modified to Phosphoserine.

Belongs to the globin family. In terms of assembly, heterotetramer of two alpha chains and two beta chains. In terms of tissue distribution, red blood cells.

In terms of biological role, involved in oxygen transport from the lung to the various peripheral tissues. Its function is as follows. Hemopressin acts as an antagonist peptide of the cannabinoid receptor CNR1. Hemopressin-binding efficiently blocks cannabinoid receptor CNR1 and subsequent signaling. This chain is Hemoglobin subunit alpha (HBA), found in Rhinoceros unicornis (Greater Indian rhinoceros).